We begin with the raw amino-acid sequence, 69 residues long: Double-strand break reduction protein (69 aa).

Helps to maintain the integrity of the chromosome by lowering the steady-state level of double strand breaks. This region of DNA acts as an antitoxin to toxin RalR, a DNase, but it seems to be sRNA RalA that has the antitoxin activity and not this putative protein. Therefore the identity of this as a protein-coding gene has been cast into doubt. The chain is Double-strand break reduction protein from Escherichia coli (strain K12).